The sequence spans 433 residues: Oxaloacetate decarboxylase beta chain (433 aa).

Helical transmembrane passes span Leu16–Ala36, Val122–Met142, Thr159–Leu178, Leu180–Ala202, Ile222–Leu244, Ile266–Leu286, Thr308–Ala327, Thr339–Ala361, and Met409–Leu431.

It belongs to the GcdB/MmdB/OadB family. In terms of assembly, heterotrimer of an alpha, a beta and a gamma subunit. Na(+) is required as a cofactor. The N-terminus is blocked.

It localises to the cell membrane. It carries out the reaction oxaloacetate + 2 Na(+)(in) + H(+) = pyruvate + 2 Na(+)(out) + CO2. In terms of biological role, catalyzes the decarboxylation of oxaloacetate coupled to Na(+) translocation. The chain is Oxaloacetate decarboxylase beta chain (oadB) from Klebsiella pneumoniae.